A 579-amino-acid polypeptide reads, in one-letter code: Suppressor of cytokine signaling 7 (579 aa).

Disordered stretches follow at residues 1-25, 89-270, and 295-315; these read MVFRNVGRPPEEEDAEAAREPGPSE, PPPP…RTQS, and QRGLTSPHPPTPPPPPRRSLS. 3 stretches are compositionally biased toward pro residues: residues 89–99, 155–165, and 185–196; these read PPPPQPPPPAA, PPGPELPPVPF, and QPPPPPPPPGPL. Residues 124 to 492 form a mediates interaction with SORBS3 region; sequence AESLETNSCS…GKFLYFLRSR (369 aa). Residues 206–217 are compositionally biased toward basic residues; it reads GSFKIRLSRLFR. Positions 301-311 are enriched in pro residues; the sequence is PHPPTPPPPPR. The region spanning 398 to 507 is the SH2 domain; it reads WYWGPMNWED…PTPVQLLYPV (110 aa). In terms of domain architecture, SOCS box spans 502–552; sequence QLLYPVSRFSNVKSLQHLCRFRIRQLVRIDHIPDLPLPKPLISYIRKFYYY.

As to quaternary structure, substrate-recognition component of the ECS(SOCS7) complex, composed of SOCS7, CUL5, ELOB, ELOC and RNF7/RBX2. Interacts, via the third proline-rich region, with the second SH3 domain of the adapter protein NCK1. Also interacts with GRB2, INSR, PLCG1, SORBS3/vinexin, and phosphorylated STAT3 and STAT5. Interacts with SEPT6. Interacts with phosphorylated IRS4 and PIK3R1. As to expression, widely expressed with higher expression in brain and testis where it is expressed by spermatocytes and early spermatids. Also significantly expressed in spleen, skeletal muscle and kidney.

The protein resides in the cytoplasm. It is found in the nucleus. It localises to the cell membrane. Its pathway is protein modification; protein ubiquitination. Substrate-recognition component of a cullin-5-RING E3 ubiquitin-protein ligase complex (ECS complex, also named CRL5 complex), which mediates the ubiquitination and subsequent proteasomal degradation of target proteins, such as DAB1 and IRS1. Specifically recognizes and binds phosphorylated proteins via its SH2 domain, promoting their ubiquitination. The ECS(SOCS7) complex acts as a key regulator of reelin signaling by mediating ubiquitination and degradation of phosphorylated DAB1 in the cortical plate of the developing cerebral cortex, thereby regulating neuron positioning during cortex development. Functions in insulin signaling and glucose homeostasis through IRS1 ubiquitination and subsequent proteasomal degradation. Also inhibits prolactin, growth hormone and leptin signaling by preventing STAT3 and STAT5 activation, sequestering them in the cytoplasm and reducing their binding to DNA. In Mus musculus (Mouse), this protein is Suppressor of cytokine signaling 7.